The primary structure comprises 784 residues: ATP-dependent 6-phosphofructokinase, platelet type (784 aa).

M1 carries the post-translational modification N-acetylmethionine. The N-terminal catalytic PFK domain 1 stretch occupies residues 1–398; the sequence is MSDLDSSSSS…NLNTYKRLAI (398 aa). Phosphoserine occurs at positions 2, 6, and 20. ATP-binding positions include G33, 96-97, and 126-129; these read RC and GDGS. Residue D127 coordinates Mg(2+). Phosphoserine is present on S141. Residues 172–174, R209, 216–218, E272, R300, and 306–309 contribute to the substrate site; these read SID, MGR, and HVQR. Catalysis depends on D174, which acts as the Proton acceptor. K394 carries the N6-acetyllysine modification. The segment at 399–410 is interdomain linker; it reads KLPDEKIVKSNC. Positions 411 to 784 are C-terminal regulatory PFK domain 2; it reads NVAVINVGAP…LESLQHHEEL (374 aa). Beta-D-fructose 2,6-bisphosphate is bound at residue R480. K485 is subject to N6-acetyllysine. Beta-D-fructose 2,6-bisphosphate-binding positions include 537-541, R575, 582-584, and E638; these read TVSNN and MGG. An O-linked (GlcNAc) serine glycan is attached at S539. Y650 carries the post-translational modification Phosphotyrosine. Residues R664 and 670 to 673 each bind beta-D-fructose 2,6-bisphosphate; that span reads HMQQ. The residue at position 687 (K687) is an N6-acetyllysine. Position 743 (R743) interacts with beta-D-fructose 2,6-bisphosphate.

The protein belongs to the phosphofructokinase type A (PFKA) family. ATP-dependent PFK group I subfamily. Eukaryotic two domain clade 'E' sub-subfamily. Homo- and heterotetramers. Phosphofructokinase (PFK) enzyme functions as a tetramer composed of different combinations of 3 types of subunits, called PFKM (M), PFKL (L) and PFKP (P). The composition of the PFK tetramer differs according to the tissue type it is present in. The kinetic and regulatory properties of the tetrameric enzyme are dependent on the subunit composition, hence can vary across tissues. Interacts with ATG4B; promoting phosphorylation of ATG4B. Requires Mg(2+) as cofactor. GlcNAcylation decreases enzyme activity. As to expression, expression is constant during tumor growth and markedly decreases when cell proliferation stops.

The protein resides in the cytoplasm. It carries out the reaction beta-D-fructose 6-phosphate + ATP = beta-D-fructose 1,6-bisphosphate + ADP + H(+). It participates in carbohydrate degradation; glycolysis; D-glyceraldehyde 3-phosphate and glycerone phosphate from D-glucose: step 3/4. Allosterically activated by ADP, AMP, or fructose 2,6-bisphosphate, and allosterically inhibited by ATP or citrate. Its function is as follows. Catalyzes the phosphorylation of D-fructose 6-phosphate to fructose 1,6-bisphosphate by ATP, the first committing step of glycolysis. The protein is ATP-dependent 6-phosphofructokinase, platelet type (Pfkp) of Mus musculus (Mouse).